Consider the following 810-residue polypeptide: MIPVTELRYFADTQPAYRILKPWWDVFTDYISIVMLMIAVFGGTLQVTQDKMICLPCKWVTKDSCNDSFRGWAAPGPEPTYPNSTILPTPDTGPTGIKYDLDRHQYNYVDAVCYENRLHWFAKYFPYLVLLHTLIFLACSNFWFKFPRTSSKLEHFVSILLKCFDSPWTTRALSETVVEESDPKPAFSKMNGSMDKKSSTVSEDVEATVPMLQRTKSRIEQGIVDRSETGVLDKKEGEQAKALFEKVKKFRTHVEEGDIVYRLYMRQTIIKVIKFILIICYTVYYVHNIKFDVDCTVDIESLTGYRTYRCAHPLATLFKILASFYISLVIFYGLICMYTLWWMLRRSLKKYSFESIREESSYSDIPDVKNDFAFMLHLIDQYDPLYSKRFAVFLSEVSENKLRQLNLNNEWTLDKLRQRLTKNAQDKLELHLFMLSGIPDTVFDLVELEVLKLELIPDVTIPPSIAQLTGLKELWLYHTAAKIEAPALAFLRENLRALHIKFTDIKEIPLWIYSLKTLEELHLTGNLSAENNRYIVIDGLRELKRLKVLRLKSNLSKLPQVVTDVGVHLQKLSINNEGTKLIVLNSLKKMANLTELELIRCDLERIPHSIFSLHNLQEIDLKDNNLKTIEEIISFQHLHRLTCLKLWYNHIAYIPIQIGNLTNLERLYLNRNKIEKIPTQLFYCRKLRYLDLSHNNLTFLPADIGLLQNLQNLAITANRIETLPPELFQCRKLRALHLGNNVLQSLPSRVGELTNLTQIELRGNRLECLPVELGECPLLKRSGLVVEEDLFNTLPPEVKERLWRADKEQA.

N-acetylmethionine is present on Met1. At 1 to 23 the chain is on the cytoplasmic side; that stretch reads MIPVTELRYFADTQPAYRILKPW. A helical transmembrane segment spans residues 24–47; sequence WDVFTDYISIVMLMIAVFGGTLQV. At 48 to 123 the chain is on the extracellular side; it reads TQDKMICLPC…YENRLHWFAK (76 aa). Intrachain disulfides connect Cys54/Cys310, Cys57/Cys65, and Cys113/Cys295. Asn66 and Asn83 each carry an N-linked (GlcNAc...) asparagine glycan. The chain crosses the membrane as a helical span at residues 124 to 142; the sequence is YFPYLVLLHTLIFLACSNF. Residues 143-264 lie on the Cytoplasmic side of the membrane; sequence WFKFPRTSSK…EEGDIVYRLY (122 aa). At Thr200 the chain carries Phosphothreonine. Ser202 is subject to Phosphoserine. Thr215 is subject to Phosphothreonine. At Ser217 the chain carries Phosphoserine. The chain crosses the membrane as a helical span at residues 265 to 286; sequence MRQTIIKVIKFILIICYTVYYV. The Extracellular segment spans residues 287–316; that stretch reads HNIKFDVDCTVDIESLTGYRTYRCAHPLAT. Residues 317–341 form a helical membrane-spanning segment; it reads LFKILASFYISLVIFYGLICMYTLW. Over 342–810 the chain is Cytoplasmic; the sequence is WMLRRSLKKY…RLWRADKEQA (469 aa). LRR repeat units follow at residues 399-422, 423-445, 447-468, 469-492, 493-515, 518-542, 543-565, 567-589, 590-613, 615-637, 639-661, 662-684, 686-707, 708-730, 732-753, 754-776, and 778-801; these read ENKL…RLTK, NAQD…VFDL, ELEV…IAQL, TGLK…AFLR, ENLR…IYSL, LEEL…GLRE, LKRL…VTDV, VHLQ…SLKK, MANL…IFSL, NLQE…SFQH, HRLT…IGNL, TNLE…LFYC, KLRY…IGLL, QNLQ…LFQC, KLRA…VGEL, TNLT…LGEC, and LLKR…VKER. The short motif at 706-707 is the Di-leucine motif element; the sequence is LL.

Belongs to the LRRC8 family. As to quaternary structure, heterohexamer; oligomerizes with other LRRC8 proteins (LRRC8B, LRRC8C, LRRC8D and/or LRRC8E) to form a heterohexamer. Can form homohexamers in vitro, but these have lower conductance than heterohexamers. In vivo, the subunit composition may depend primarily on expression levels, and heterooligomeric channels containing various proportions of the different LRRC8 proteins may coexist. Interact with GRB2. Interacts with NOX4; this interaction prevents the ubiquitin-mediated degradation of LRRC8A. N-glycosylated. Expressed in brain, kidney, ovary, lung, liver, heart, and fetal brain and liver. Found at high levels in bone marrow; lower levels are detected in peripheral blood cells. Expressed on T-cells as well as on B-lineage cells.

The protein resides in the cell membrane. The protein localises to the lysosome membrane. It carries out the reaction chloride(in) = chloride(out). It catalyses the reaction iodide(out) = iodide(in). The enzyme catalyses taurine(out) = taurine(in). The catalysed reaction is L-aspartate(out) = L-aspartate(in). It carries out the reaction L-glutamate(out) = L-glutamate(in). It catalyses the reaction myo-inositol(out) = myo-inositol(in). The enzyme catalyses 2',3'-cGAMP(out) = 2',3'-cGAMP(in). Inhibited by (4-[(2-butyl-6,7-dichloro-2-cyclopentyl-2,3-dihydro-1-oxo-1H-inden-5-yl)oxy]butanoic acid), which plugs the channel like a cork in a bottle by binding in the extracellular selectivity filter and sterically occluding ion conduction. Lipids may block conduction in closed heterohexameric channels. Functionally, essential component of the volume-regulated anion channel (VRAC, also named VSOAC channel), an anion channel required to maintain a constant cell volume in response to extracellular or intracellular osmotic changes. The VRAC channel conducts iodide better than chloride and can also conduct organic osmolytes like taurine. Mediates efflux of amino acids, such as aspartate and glutamate, in response to osmotic stress. LRRC8A and LRRC8D are required for the uptake of the drug cisplatin. In complex with LRRC8C or LRRC8E, acts as a transporter of immunoreactive cyclic dinucleotide GMP-AMP (2'-3'-cGAMP), an immune messenger produced in response to DNA virus in the cytosol: mediates both import and export of 2'-3'-cGAMP, thereby promoting transfer of 2'-3'-cGAMP to bystander cells. In contrast, complexes containing LRRC8D inhibit transport of 2'-3'-cGAMP. Required for in vivo channel activity, together with at least one other family member (LRRC8B, LRRC8C, LRRC8D or LRRC8E); channel characteristics depend on the precise subunit composition. Can form functional channels by itself (in vitro). Involved in B-cell development: required for the pro-B cell to pre-B cell transition. Also required for T-cell development. Required for myoblast differentiation: VRAC activity promotes membrane hyperpolarization and regulates insulin-stimulated glucose metabolism and oxygen consumption. Also acts as a regulator of glucose-sensing in pancreatic beta cells: VRAC currents, generated in response to hypotonicity- or glucose-induced beta cell swelling, depolarize cells, thereby causing electrical excitation, leading to increase glucose sensitivity and insulin secretion. Also plays a role in lysosome homeostasis by forming functional lysosomal VRAC channels in response to low cytoplasmic ionic strength condition: lysosomal VRAC channels are necessary for the formation of large lysosome-derived vacuoles, which store and then expel excess water to maintain cytosolic water homeostasis. Acts as a key factor in NLRP3 inflammasome activation by modulating itaconate efflux and mitochondria function. This Homo sapiens (Human) protein is Volume-regulated anion channel subunit LRRC8A.